Reading from the N-terminus, the 629-residue chain is 1-deoxy-D-xylulose-5-phosphate synthase (629 aa).

Thiamine diphosphate-binding positions include His-78 and 119-121 (AHS). Residue Asp-150 participates in Mg(2+) binding. Residues 151–152 (GA), Asn-179, Tyr-286, and Glu-368 contribute to the thiamine diphosphate site. Asn-179 serves as a coordination point for Mg(2+).

This sequence belongs to the transketolase family. DXPS subfamily. As to quaternary structure, homodimer. It depends on Mg(2+) as a cofactor. Requires thiamine diphosphate as cofactor.

The catalysed reaction is D-glyceraldehyde 3-phosphate + pyruvate + H(+) = 1-deoxy-D-xylulose 5-phosphate + CO2. The protein operates within metabolic intermediate biosynthesis; 1-deoxy-D-xylulose 5-phosphate biosynthesis; 1-deoxy-D-xylulose 5-phosphate from D-glyceraldehyde 3-phosphate and pyruvate: step 1/1. Functionally, catalyzes the acyloin condensation reaction between C atoms 2 and 3 of pyruvate and glyceraldehyde 3-phosphate to yield 1-deoxy-D-xylulose-5-phosphate (DXP). The sequence is that of 1-deoxy-D-xylulose-5-phosphate synthase from Acidovorax sp. (strain JS42).